We begin with the raw amino-acid sequence, 2066 residues long: Kinesin-like protein KIN-12C (2066 aa).

Disordered stretches follow at residues 1 to 41 (MSRN…SQIQ) and 59 to 116 (RAQH…RVSL). Residues 20–33 (SLSLFSPSRPPLNS) show a composition bias toward low complexity. A compositionally biased stretch (basic and acidic residues) spans 67-76 (GPEKKFEVLE). Residues 99-109 (EPNSAQSTPTR) show a composition bias toward polar residues. Positions 168-505 (NVQVLIRLRP…LKFAQRAKLI (338 aa)) constitute a Kinesin motor domain. 249–256 (GQTGSGKT) contributes to the ATP binding site. Microtubules-binding regions lie at residues 375–379 (SSRSH), 406–412 (VDLAGSE), and 454–458 (HVPYR). Coiled-coil stretches lie at residues 1521 to 1618 (DLKT…VDEI) and 1650 to 1772 (KIYA…EILL). Disordered regions lie at residues 1803-1823 (SAAE…RGSS) and 2043-2066 (KYRK…TRYR). The stretch at 1905–2051 (VQRVVEKAQQ…AKYRKTSNNH (147 aa)) forms a coiled coil. A compositionally biased stretch (polar residues) spans 2047 to 2066 (TSNNHPSTRTQGQSSGTRYR).

Belongs to the TRAFAC class myosin-kinesin ATPase superfamily. Kinesin family. KIN-12 subfamily. As to quaternary structure, interacts with TAN. Interacts with RANGAP1. Expressed in tissues enriched in dividing cells, such as root meristems, root primordia, and leaf primordia/young leaves.

It localises to the cytoplasm. It is found in the cytoskeleton. The protein localises to the phragmoplast. Involved in the spatial control of cytokinesis by a proper phragmoplast guidance. Localizes TAN to the cortical division sites (CDS) during cytokinesis via direct binding. This Arabidopsis thaliana (Mouse-ear cress) protein is Kinesin-like protein KIN-12C.